A 473-amino-acid chain; its full sequence is Pre-mRNA-splicing factor prp5 (473 aa).

WD repeat units lie at residues 161-191, 203-233, 245-275, 287-317, 329-358, 370-399, and 419-449; these read GHLG…KIWD, GHIA…KCWD, GHLS…RVWD, GHKS…RLWD, HHKK…KHWK, GHNA…CFWD, and DSEA…KIYK.

It belongs to the WD repeat PRL1/PRL2 family. In terms of assembly, belongs to the 40S cdc5-associated complex (or cwf complex), a spliceosome sub-complex reminiscent of a late-stage spliceosome composed of the U2, U5 and U6 snRNAs and at least brr2, cdc5, cwf2/prp3, cwf3/syf1, cwf4/syf3, cwf5/ecm2, spp42/cwf6, cwf7/spf27, cwf8, cwf9, cwf10, cwf11, cwf12, prp45/cwf13, cwf14, cwf15, cwf16, cwf17, cwf18, cwf19, cwf20, cwf21, cwf22, cwf23, cwf24, cwf25, cwf26, cyp7/cwf27, cwf28, cwf29/ist3, lea1, msl1, prp5/cwf1, prp10, prp12/sap130, prp17, prp22, sap61, sap62, sap114, sap145, slu7, smb1, smd1, smd3, smf1, smg1 and syf2.

It is found in the nucleus. Functionally, required for both cell cycle progression at G2/M and pre-mRNA splicing. Interacts genetically with the PRP4 kinase. The chain is Pre-mRNA-splicing factor prp5 (prp5) from Schizosaccharomyces pombe (strain 972 / ATCC 24843) (Fission yeast).